We begin with the raw amino-acid sequence, 386 residues long: 2,3-diketo-5-methylthiopentyl-1-phosphate enolase (386 aa).

Lys85 (proton acceptor) is an active-site residue. Residues Lys131, 157–160, His248, Gly316, and 338–339 contribute to the substrate site; these read KDDE and GT. Residues Lys157, Asp159, and Glu160 each contribute to the Mg(2+) site. Lys157 carries the N6-carboxylysine modification.

It belongs to the RuBisCO large chain family. Type IV subfamily. In terms of assembly, homodimer. The cofactor is Mg(2+).

It carries out the reaction 5-methylsulfanyl-2,3-dioxopentyl phosphate = 2-hydroxy-5-methylsulfanyl-3-oxopent-1-enyl phosphate. It functions in the pathway amino-acid biosynthesis; L-methionine biosynthesis via salvage pathway; L-methionine from S-methyl-5-thio-alpha-D-ribose 1-phosphate: step 3/6. Its function is as follows. Catalyzes the enolization of 2,3-diketo-5-methylthiopentyl-1-phosphate (DK-MTP-1-P) into 2-hydroxy-3-keto-5-methylthiopentenyl-1-phosphate (HK-MTPenyl-1-P). This chain is 2,3-diketo-5-methylthiopentyl-1-phosphate enolase (mtnW), found in Microcystis aeruginosa.